Consider the following 160-residue polypeptide: Serine-protein kinase RsbW (160 aa).

It belongs to the anti-sigma-factor family.

The catalysed reaction is L-seryl-[protein] + ATP = O-phospho-L-seryl-[protein] + ADP + H(+). The enzyme catalyses L-threonyl-[protein] + ATP = O-phospho-L-threonyl-[protein] + ADP + H(+). Functionally, negative regulator of sigma-B activity. Phosphorylates and inactivates its specific antagonist protein, RsbV. Upon phosphorylation of RsbV, RsbW is released and binds to sigma-B, thereby blocking its ability to form an RNA polymerase holoenzyme (E-sigma-B). The protein is Serine-protein kinase RsbW of Bacillus velezensis (strain DSM 23117 / BGSC 10A6 / LMG 26770 / FZB42) (Bacillus amyloliquefaciens subsp. plantarum).